The primary structure comprises 382 residues: SOX domain-containing protein dichaete (382 aa).

Disordered regions lie at residues 53 to 142 and 346 to 382; these read GGSP…EGHI and YPSSSTSSPGSSPGTITPNGMDGSMDSALRRPVPVLY. The segment covering 60-69 has biased composition (gly residues); it reads AGQGVNGSSG. The span at 96-123 shows a compositional bias: low complexity; sequence NSSIGSAGSLGSQSSLGSNGSGLNSSSG. Residues 142-210 constitute a DNA-binding region (HMG box); it reads IKRPMNAFMV…LHMKEHPDYK (69 aa). Low complexity predominate over residues 347 to 360; the sequence is PSSSTSSPGSSPGT.

In terms of tissue distribution, initially expressed in a pair-rule-like pattern which is rapidly replaced by strong neuroectoderm expression.

It localises to the nucleus. Functionally, essential for segmentation and CNS development. May modulate the actions of other transcription factors, including gap and pair-rule proteins. The polypeptide is SOX domain-containing protein dichaete (D) (Drosophila melanogaster (Fruit fly)).